We begin with the raw amino-acid sequence, 58 residues long: Large ribosomal subunit protein bL32 (58 aa).

Belongs to the bacterial ribosomal protein bL32 family.

The protein is Large ribosomal subunit protein bL32 of Prochlorococcus marinus (strain MIT 9303).